The chain runs to 275 residues: 3-methyl-2-oxobutanoate hydroxymethyltransferase (275 aa).

Mg(2+)-binding residues include Asp49 and Asp88. Residues 49-50 (DS), Asp88, and Lys118 each bind 3-methyl-2-oxobutanoate. Glu120 contacts Mg(2+). Glu187 functions as the Proton acceptor in the catalytic mechanism.

It belongs to the PanB family. Homodecamer; pentamer of dimers. It depends on Mg(2+) as a cofactor.

It localises to the cytoplasm. It catalyses the reaction 3-methyl-2-oxobutanoate + (6R)-5,10-methylene-5,6,7,8-tetrahydrofolate + H2O = 2-dehydropantoate + (6S)-5,6,7,8-tetrahydrofolate. The protein operates within cofactor biosynthesis; (R)-pantothenate biosynthesis; (R)-pantoate from 3-methyl-2-oxobutanoate: step 1/2. Catalyzes the reversible reaction in which hydroxymethyl group from 5,10-methylenetetrahydrofolate is transferred onto alpha-ketoisovalerate to form ketopantoate. The sequence is that of 3-methyl-2-oxobutanoate hydroxymethyltransferase from Rhodospirillum centenum (strain ATCC 51521 / SW).